The chain runs to 424 residues: Endoglucanase 1 (424 aa).

The N-terminal stretch at 1–18 is a signal peptide; that stretch reads MAKFSALCSLALLGLATA. 9 disulfide bridges follow: Cys-35/Cys-41, Cys-68/Cys-90, Cys-80/Cys-86, Cys-156/Cys-384, Cys-188/Cys-211, Cys-192/Cys-210, Cys-231/Cys-250, Cys-239/Cys-244, and Cys-255/Cys-331. An N-linked (GlcNAc...) asparagine glycan is attached at Asn-76. Glu-213 acts as the Nucleophile in catalysis. Residue Glu-218 is the Proton donor of the active site. 2 N-linked (GlcNAc...) asparagine glycosylation sites follow: Asn-271 and Asn-385.

It belongs to the glycosyl hydrolase 7 (cellulase C) family. Monomer.

Its subcellular location is the secreted. It catalyses the reaction Endohydrolysis of (1-&gt;4)-beta-D-glucosidic linkages in cellulose, lichenin and cereal beta-D-glucans.. Functionally, endoglucanase that is involved in the biological conversion of cellulose to glucose. Hydrolyzes internal beta-1,4-glucosidic bonds. The sequence is that of Endoglucanase 1 from Pyricularia oryzae (strain 70-15 / ATCC MYA-4617 / FGSC 8958) (Rice blast fungus).